Consider the following 223-residue polypeptide: Regulator of G-protein signaling 19 (223 aa).

Positions 1 to 30 (MPTPPEAEKQQTGPEEADQPPSMSSHDAAP) are disordered. Low complexity predominate over residues 20-29 (PPSMSSHDAA). Residues S24 and S103 each carry the phosphoserine modification. Positions 96–212 (SFDKLMHSPA…LSSPAYRALL (117 aa)) constitute an RGS domain. The residue at position 157 (S157) is a Phosphoserine; by MAPK1 and MAPK3. Residues 213 to 223 (LQGASQSSSEA) are interaction with GIPC.

In terms of assembly, interacts with GIPC PDZ domain. Interacts with GNAO1. Fatty acylated. Heavily palmitoylated in the cysteine string motif. In terms of processing, phosphorylated, mainly on serine residues.

It is found in the membrane. Inhibits signal transduction by increasing the GTPase activity of G protein alpha subunits thereby driving them into their inactive GDP-bound form. Binds to G-alpha subfamily 1 members, with the order G(i)a3 &gt; G(i)a1 &gt; G(o)a &gt;&gt; G(z)a/G(i)a2. Activity on G(z)-alpha is inhibited by phosphorylation and palmitoylation of the G-protein. This is Regulator of G-protein signaling 19 (RGS19) from Bos taurus (Bovine).